The primary structure comprises 260 residues: Snake venom serine protease KN6 (260 aa).

The N-terminal stretch at 1–18 (MVLIRVLANLLILQLSYA) is a signal peptide. Positions 19 to 24 (QKSSEL) are excised as a propeptide. Residues 25–251 (VIGGDECNIN…HLDWIQSIIA (227 aa)) form the Peptidase S1 domain. Intrachain disulfides connect Cys-31–Cys-165, Cys-100–Cys-258, Cys-144–Cys-212, Cys-176–Cys-191, and Cys-202–Cys-227. The Charge relay system role is filled by His-67. Residue Asn-105 is glycosylated (N-linked (GlcNAc...) asparagine). Residue Asp-112 is the Charge relay system of the active site. Asn-172 carries an N-linked (GlcNAc...) asparagine glycan. Ser-206 serves as the catalytic Charge relay system. Residues Asn-213 and Asn-255 are each glycosylated (N-linked (GlcNAc...) asparagine).

This sequence belongs to the peptidase S1 family. Snake venom subfamily. In terms of assembly, monomer. Expressed by the venom gland.

It localises to the secreted. Its function is as follows. Snake venom serine protease that may act in the hemostasis system of the prey. The sequence is that of Snake venom serine protease KN6 from Trimeresurus stejnegeri (Chinese green tree viper).